A 1044-amino-acid chain; its full sequence is Probable pre-mRNA-splicing factor ATP-dependent RNA helicase DEAH6 (1044 aa).

2 disordered regions span residues 99–134 (EADH…SEQL) and 152–211 (RRKV…VRRD). Over residues 157-167 (EDEDDGTESEE) the composition is skewed to acidic residues. A compositionally biased stretch (basic and acidic residues) spans 168–211 (ERLRDQREREELEQHLRERDTARTRKLTEPKMSKKEQEEFVRRD). The region spanning 414–577 (LNAVKDHQVL…FDQAPIFRFP (164 aa)) is the Helicase ATP-binding domain. 427–434 (GETGSGKT) contacts ATP. The short motif at 524 to 527 (DEAH) is the DEAH box element. The 177-residue stretch at 599–775 (AITTVLTIHV…SVVLSLKSLG (177 aa)) folds into the Helicase C-terminal domain.

This sequence belongs to the DEAD box helicase family. DEAH subfamily. PRP2 sub-subfamily. Predominantly expressed in flowers.

It catalyses the reaction ATP + H2O = ADP + phosphate + H(+). Functionally, may be involved in pre-mRNA splicing. In Arabidopsis thaliana (Mouse-ear cress), this protein is Probable pre-mRNA-splicing factor ATP-dependent RNA helicase DEAH6.